A 1004-amino-acid chain; its full sequence is 26S proteasome non-ATPase regulatory subunit 1 homolog A (1004 aa).

Alanine 2 carries the N-acetylalanine modification. A Glycyl lysine isopeptide (Lys-Gly) (interchain with G-Cter in ubiquitin) cross-link involves residue lysine 166. PC repeat units follow at residues 412–447, 452–485, 487–521, 522–555, 557–590, 591–626, 627–659, 661–695, 696–736, and 739–771; these read SATA…GGSP, GALY…EVIQ, GACL…VAGE, AAGI…EKII, GLAL…IIRY, GGMY…DVRR, TAVL…PHVR, GAAL…FVRQ, GALI…DTMS, and GAIL…TAVI. 2 disordered regions span residues 858 to 905 and 959 to 1004; these read EQKA…KKAP and VLSL…EYAS. At serine 896 the chain carries Phosphoserine. Residues 965-987 are compositionally biased toward low complexity; the sequence is APTSTASPATGTAAAAQGTPASA.

The protein belongs to the proteasome subunit S1 family. Component of the 19S regulatory particle (RP/PA700) base subcomplex of the 26S proteasome. The 26S proteasome is composed of a core protease (CP), known as the 20S proteasome, capped at one or both ends by the 19S regulatory particle (RP/PA700). The RP/PA700 complex is composed of at least 17 different subunits in two subcomplexes, the base and the lid, which form the portions proximal and distal to the 20S proteolytic core, respectively. As to expression, ubiquitous with highest expression in flowers.

Functionally, acts as a regulatory subunit of the 26 proteasome which is involved in the ATP-dependent degradation of ubiquitinated proteins. This Arabidopsis thaliana (Mouse-ear cress) protein is 26S proteasome non-ATPase regulatory subunit 1 homolog A (RPN2A).